The sequence spans 393 residues: Formate-dependent phosphoribosylglycinamide formyltransferase (393 aa).

N(1)-(5-phospho-beta-D-ribosyl)glycinamide contacts are provided by residues 22-23 and Glu82; that span reads EL. ATP is bound by residues Arg114, Lys155, 160-165, 195-198, and Glu203; these read SSGKGQ and EGFI. In terms of domain architecture, ATP-grasp spans 119 to 308; it reads RLAAEELGLP…EFALHARAIL (190 aa). Residues Glu267 and Glu279 each contribute to the Mg(2+) site. N(1)-(5-phospho-beta-D-ribosyl)glycinamide-binding positions include Asp286, Lys356, and 363 to 364; that span reads RR.

This sequence belongs to the PurK/PurT family. In terms of assembly, homodimer.

The enzyme catalyses N(1)-(5-phospho-beta-D-ribosyl)glycinamide + formate + ATP = N(2)-formyl-N(1)-(5-phospho-beta-D-ribosyl)glycinamide + ADP + phosphate + H(+). It functions in the pathway purine metabolism; IMP biosynthesis via de novo pathway; N(2)-formyl-N(1)-(5-phospho-D-ribosyl)glycinamide from N(1)-(5-phospho-D-ribosyl)glycinamide (formate route): step 1/1. Functionally, involved in the de novo purine biosynthesis. Catalyzes the transfer of formate to 5-phospho-ribosyl-glycinamide (GAR), producing 5-phospho-ribosyl-N-formylglycinamide (FGAR). Formate is provided by PurU via hydrolysis of 10-formyl-tetrahydrofolate. The polypeptide is Formate-dependent phosphoribosylglycinamide formyltransferase (Azotobacter vinelandii (strain DJ / ATCC BAA-1303)).